A 309-amino-acid chain; its full sequence is Putative HTH-type transcriptional regulatory protein AF_1787 (309 aa).

Positions 131 to 185 (IREARERLGLSVGDMAKMLGVSRRTVKKYEEGTDTTLSTAAKIEEIIGTFAIKEI) constitute an HTH cro/C1-type domain. A DNA-binding region (H-T-H motif) is located at residues 142–161 (VGDMAKMLGVSRRTVKKYEE).

The polypeptide is Putative HTH-type transcriptional regulatory protein AF_1787 (Archaeoglobus fulgidus (strain ATCC 49558 / DSM 4304 / JCM 9628 / NBRC 100126 / VC-16)).